Consider the following 798-residue polypeptide: ATP-dependent RecD2 DNA helicase (798 aa).

ATP is bound at residue 370 to 374 (GTGKT).

It belongs to the RecD family. RecD2 subfamily. As to quaternary structure, interacts with SSB (sbbA).

Its subcellular location is the cytoplasm. It localises to the nucleoid. The catalysed reaction is Couples ATP hydrolysis with the unwinding of duplex DNA at the replication fork by translocating in the 5'-3' direction. This creates two antiparallel DNA single strands (ssDNA). The leading ssDNA polymer is the template for DNA polymerase III holoenzyme which synthesizes a continuous strand.. The enzyme catalyses ATP + H2O = ADP + phosphate + H(+). Functionally, in vivo may favor replication restart by preventing RecA from binding to blocked replication forks, avoiding unnecessary recombination during replication restart. Acts as a negative modulator of the RecA-ssDNA filament, may dissasemble RecA threads, can act as both a positive and negative regulator of strand exchange. Probably stabilizes or aids normal replication fork progression, is important for survival after treatment with DNA-damaging agents that can result in replication fork stress. Overcomes the inhibition of replication restart by RecA/RecO, probably by displacing RecA. Increasing levels inhibit PriA-dependent DNA replication initiation (but have little effect on ongoing replication) in vitro; may act by disturbing SsbA assembly. Probably has a role in recombinational DNA repair. Does not seem to contribute to mismatch repair. Has 5'-3' helicase activity that is probably ATP-dependent. The polypeptide is ATP-dependent RecD2 DNA helicase (Bacillus subtilis (strain 168)).